Reading from the N-terminus, the 607-residue chain is MDIKNKNLTELNELCKQIRERILEVVSQNGGHLSSNMGAVELIVAMHYVFDPDSDPFIFDVSHQSYAHKLLTGRWDEFSSLRQLGGISGYTKPKESKFDYFVAGHSSTSISLAVGAAKAIKLKGENRIPVALIGDGAMSAGMAYEAMNELGERKYPCIIILNDNEMSISRPIGAISKYLSQMMAGEFYQKFKGRVNQLLSYIPDGAAYMAKRFEEGFRLITPGMLFEELGLEYIGPVNGHDLADLISAFKVAKSMKKPVIVHTQTIKGKGYEKAEGFDEHWHGVGPFDLQSGEPKKHAKRSATQIYSEALLNLAAKHKNVVGVTAAMPTGTGMDKLIEAFPERFWDVAIAEQHAVTSMAAMAKEGFKPYITIYSTFMQRAYDQVIHDLAIMNLSAVIAMDRAGIVGEDGETHEGCFDISFLNAIPNVSMCAPRDEQSFKDMIEYSYVHEGLLAIRYPRGSFILHEQFKDAPKISRGKSVLLRENKNAKTALIGYGNGVGRAYEVSIKLDFETDLIDLVFAKPLDKEFLINLAKKDKIWYIFSDSVKKGGIGDILSAFLQENKIYDVEINTFEYDDKFLPHGKTPDVEYFLGLDIDSLAKKILNDKKY.

Thiamine diphosphate is bound by residues H63 and 104 to 106 (GHS). Residue D135 participates in Mg(2+) binding. Thiamine diphosphate is bound by residues 136 to 137 (GA), N164, Y271, and E351. Residue N164 coordinates Mg(2+).

This sequence belongs to the transketolase family. DXPS subfamily. As to quaternary structure, homodimer. Mg(2+) is required as a cofactor. It depends on thiamine diphosphate as a cofactor.

It catalyses the reaction D-glyceraldehyde 3-phosphate + pyruvate + H(+) = 1-deoxy-D-xylulose 5-phosphate + CO2. It functions in the pathway metabolic intermediate biosynthesis; 1-deoxy-D-xylulose 5-phosphate biosynthesis; 1-deoxy-D-xylulose 5-phosphate from D-glyceraldehyde 3-phosphate and pyruvate: step 1/1. Its function is as follows. Catalyzes the acyloin condensation reaction between C atoms 2 and 3 of pyruvate and glyceraldehyde 3-phosphate to yield 1-deoxy-D-xylulose-5-phosphate (DXP). The protein is 1-deoxy-D-xylulose-5-phosphate synthase of Campylobacter hominis (strain ATCC BAA-381 / DSM 21671 / CCUG 45161 / LMG 19568 / NCTC 13146 / CH001A).